A 699-amino-acid polypeptide reads, in one-letter code: Elongation factor G (699 aa).

Positions 8 to 288 (EDYRNFGIMA…AVVDYLPSPL (281 aa)) constitute a tr-type G domain. Residues 17-24 (AHIDAGKT), 86-90 (DTPGH), and 140-143 (NKMD) contribute to the GTP site.

Belongs to the TRAFAC class translation factor GTPase superfamily. Classic translation factor GTPase family. EF-G/EF-2 subfamily.

It is found in the cytoplasm. Its function is as follows. Catalyzes the GTP-dependent ribosomal translocation step during translation elongation. During this step, the ribosome changes from the pre-translocational (PRE) to the post-translocational (POST) state as the newly formed A-site-bound peptidyl-tRNA and P-site-bound deacylated tRNA move to the P and E sites, respectively. Catalyzes the coordinated movement of the two tRNA molecules, the mRNA and conformational changes in the ribosome. This is Elongation factor G from Rhizobium etli (strain ATCC 51251 / DSM 11541 / JCM 21823 / NBRC 15573 / CFN 42).